Consider the following 404-residue polypeptide: Nicotinate phosphoribosyltransferase (404 aa).

His224 carries the phosphohistidine; by autocatalysis modification.

The protein belongs to the NAPRTase family. Transiently phosphorylated on a His residue during the reaction cycle. Phosphorylation strongly increases the affinity for substrates and increases the rate of nicotinate D-ribonucleotide production. Dephosphorylation regenerates the low-affinity form of the enzyme, leading to product release.

It carries out the reaction nicotinate + 5-phospho-alpha-D-ribose 1-diphosphate + ATP + H2O = nicotinate beta-D-ribonucleotide + ADP + phosphate + diphosphate. It functions in the pathway cofactor biosynthesis; NAD(+) biosynthesis; nicotinate D-ribonucleotide from nicotinate: step 1/1. Functionally, catalyzes the synthesis of beta-nicotinate D-ribonucleotide from nicotinate and 5-phospho-D-ribose 1-phosphate at the expense of ATP. This is Nicotinate phosphoribosyltransferase from Proteus mirabilis (strain HI4320).